The sequence spans 315 residues: 1,2-dihydroxy-3,5-cyclohexadiene-1,4-dicarboxylate dehydrogenase (315 aa).

Residues H159, H203, and H255 each contribute to the a divalent metal cation site.

Belongs to the PdxA family.

The catalysed reaction is (3S,4R)-3,4-dihydroxycyclohexa-1,5-diene-1,4-dicarboxylate + NAD(+) = 3,4-dihydroxybenzoate + CO2 + NADH. Involved in the degradation of terephthalate (TPA) via the protocatechuate (PCA) 4,5-cleavage pathway. Catalyzes the dehydrogenation of 1,2-dihydroxy-3,5-cyclohexadiene-1,4-dicarboxylate (DCD) to yield protocatechuate (PCA). The polypeptide is 1,2-dihydroxy-3,5-cyclohexadiene-1,4-dicarboxylate dehydrogenase (tphBI) (Comamonas sp).